A 74-amino-acid chain; its full sequence is Large ribosomal subunit protein bL31 (74 aa).

Positions 16, 18, 38, and 41 each coordinate Zn(2+).

Belongs to the bacterial ribosomal protein bL31 family. Type A subfamily. In terms of assembly, part of the 50S ribosomal subunit. Zn(2+) is required as a cofactor.

In terms of biological role, binds the 23S rRNA. This is Large ribosomal subunit protein bL31 (rpmE) from Streptomyces coelicolor (strain ATCC BAA-471 / A3(2) / M145).